A 175-amino-acid chain; its full sequence is MARISSDPLMVGRVIGDVVDNCLQAVKMTVTYNSDKQVYNGHELFPSVVTYKPKVEVHGGDMRSFFTLVMTDPDVPGPSDPYLREHLHWIVTDIPGTTDVSFGKEIIGYEMPRPNIGIHRFVYLLFKQTRRGSVVSVPSYRDQFNTREFAHENDLGLPVAAVFFNCQRETAARRR.

Belongs to the phosphatidylethanolamine-binding protein family. In terms of tissue distribution, expressed in tissues surrounding vascular bundles in hypocotyl of 2-week-old plants.

The protein localises to the cytoplasm. Functionally, may form complexes with phosphorylated ligands by interfering with kinases and their effectors. Can substitute for TERMINAL FLOWER 1 (in vitro). The chain is Protein CENTRORADIALIS-like (CEN) from Arabidopsis thaliana (Mouse-ear cress).